The sequence spans 262 residues: 5'-nucleotidase SurE (262 aa).

A divalent metal cation is bound by residues Asp-9, Asp-10, Ser-40, and Asn-95.

It belongs to the SurE nucleotidase family. A divalent metal cation is required as a cofactor.

The protein localises to the cytoplasm. It carries out the reaction a ribonucleoside 5'-phosphate + H2O = a ribonucleoside + phosphate. Functionally, nucleotidase that shows phosphatase activity on nucleoside 5'-monophosphates. This is 5'-nucleotidase SurE from Aliarcobacter butzleri (strain RM4018) (Arcobacter butzleri).